The primary structure comprises 651 residues: Coronin-like protein (651 aa).

WD repeat units lie at residues 79 to 110 (GHTAQVLDTDFDPFNDHRIASGSDDSKIGIWD), 138 to 169 (GHARKVGHVLYHPVAENVLASSSGDYTVKLWN), 180 to 210 (KHPDMVTSMSFSYDGNYLATVARDKKLRVWN), and 226 to 257 (AKNQRVVWLGNSDRLATTGFSKLSDRQIGIWD). Positions 408-609 (APSFHEAKRP…TSPKSLGLKK (202 aa)) are disordered. A compositionally biased stretch (basic and acidic residues) spans 427–451 (LEEKKEQPKVEKPISESEKEVKQEA). Phosphoserine occurs at positions 441, 454, and 456. Over residues 452-465 (PKSPSPLKSASSSS) the composition is skewed to low complexity. A phosphothreonine mark is found at threonine 517 and threonine 529. Basic and acidic residues-rich tracts occupy residues 523 to 540 (ETKKDRTPKVEPSKELKP) and 547 to 572 (TDRKQEQSLPQEEKSSEKTKSPEQEK). Serine 573 and serine 579 each carry phosphoserine. Residues 578-590 (SSITAAKTAITAS) are compositionally biased toward low complexity. Residues 618 to 650 (VLQLEDVVDKLTKANLDKDERLLKLEQKIGELS) are a coiled coil.

The protein belongs to the WD repeat coronin family. In terms of assembly, binds to F-actin.

This Saccharomyces cerevisiae (strain ATCC 204508 / S288c) (Baker's yeast) protein is Coronin-like protein (CRN1).